Consider the following 346-residue polypeptide: Partitioning defective 6 homolog alpha (346 aa).

The interval 1-116 is interaction with PRKCI and PRKCZ; sequence MARPQRTPAR…SNSLQRRKKG (116 aa). The 81-residue stretch at 15-95 folds into the PB1 domain; it reads IVEVKSKFDA…PPLRLLVQKR (81 aa). The segment at 126 to 253 is interaction with PARD3 and CDC42; sequence RTRPPLLISL…VTVKPANQRN (128 aa). Residues 133–150 enclose the Pseudo-CRIB domain; the sequence is ISLPQDFRQVSSVIDVDL. Residues 157–250 form the PDZ domain; sequence RVRLHKHGSD…NLIVTVKPAN (94 aa). Disordered regions lie at residues 257–294 and 317–346; these read RGAS…HPPC and GSSL…GFSL. S278 carries the post-translational modification Phosphoserine. The span at 317–332 shows a compositional bias: polar residues; the sequence is GSSLPSLDSREQANSG. S345 carries the post-translational modification Phosphoserine.

It belongs to the PAR6 family. As to quaternary structure, interacts with PALS1 and CRB3. Interacts with PARD3. Interacts with GTP-bound forms of CDC42, RHOQ/TC10 and RAC1. Interacts with the N-terminal part of PRKCI and PRKCZ. Part of a complex with PARD3, CDC42 or RAC1 and PRKCI or PRKCZ. Part of a complex with LLGL1 and PRKCI. Interacts with MAP2K5. Interacts with TGFBR1; involved in TGF-beta induced epithelial to mesenchymal transition. Interacts with ECT2 ('Thr-359' phosphorylated form) and PRKCI. Interacts with DCTN1 and PCM1. Phosphorylated by the TGF-beta receptor. In terms of processing, ubiquitinated by the SCF(FBXO31) complex, leading to its proteasomal degradation.

The protein localises to the cytoplasm. Its subcellular location is the cell membrane. It localises to the cell junction. The protein resides in the tight junction. It is found in the cytoskeleton. The protein localises to the microtubule organizing center. Its subcellular location is the centrosome. It localises to the centriolar satellite. Its function is as follows. Adapter protein involved in asymmetrical cell division and cell polarization processes. Probably involved in the formation of epithelial tight junctions. Association with PARD3 may prevent the interaction of PARD3 with F11R/JAM1, thereby preventing tight junction assembly. The PARD6-PARD3 complex links GTP-bound Rho small GTPases to atypical protein kinase C proteins. Regulates centrosome organization and function. Essential for the centrosomal recruitment of key proteins that control centrosomal microtubule organization. This is Partitioning defective 6 homolog alpha (Pard6a) from Rattus norvegicus (Rat).